The primary structure comprises 210 residues: ATP-dependent Clp protease proteolytic subunit (210 aa).

Catalysis depends on serine 106, which acts as the Nucleophile. The active site involves histidine 131.

It belongs to the peptidase S14 family. In terms of assembly, fourteen ClpP subunits assemble into 2 heptameric rings which stack back to back to give a disk-like structure with a central cavity, resembling the structure of eukaryotic proteasomes.

The protein localises to the cytoplasm. The enzyme catalyses Hydrolysis of proteins to small peptides in the presence of ATP and magnesium. alpha-casein is the usual test substrate. In the absence of ATP, only oligopeptides shorter than five residues are hydrolyzed (such as succinyl-Leu-Tyr-|-NHMec, and Leu-Tyr-Leu-|-Tyr-Trp, in which cleavage of the -Tyr-|-Leu- and -Tyr-|-Trp bonds also occurs).. Its function is as follows. Cleaves peptides in various proteins in a process that requires ATP hydrolysis. Has a chymotrypsin-like activity. Plays a major role in the degradation of misfolded proteins. This chain is ATP-dependent Clp protease proteolytic subunit, found in Afipia carboxidovorans (strain ATCC 49405 / DSM 1227 / KCTC 32145 / OM5) (Oligotropha carboxidovorans).